The sequence spans 535 residues: Arylsulfatase K (535 aa).

The signal sequence occupies residues 1-22 (MLLLWLSVFAASALAAPDRGAG). 2 residues coordinate Ca(2+): Asp44 and Cys84. Cys84 functions as the Nucleophile in the catalytic mechanism. Cys84 carries the 3-oxoalanine (Cys) modification. Asn112 carries N-linked (GlcNAc...) asparagine glycosylation. Substrate is bound at residue Lys132. Asn197 carries an N-linked (GlcNAc...) asparagine glycan. Residue His255 participates in substrate binding. N-linked (GlcNAc...) asparagine glycosylation is present at Asn266. Positions 317 and 318 each coordinate Ca(2+). Residues Asn379, Asn417, and Asn502 are each glycosylated (N-linked (GlcNAc...) asparagine).

Belongs to the sulfatase family. The cofactor is Ca(2+). In terms of processing, the conversion to 3-oxoalanine (also known as C-formylglycine, FGly), of a serine or cysteine residue in prokaryotes and of a cysteine residue in eukaryotes, is critical for catalytic activity. The 75-kDa precursor undergoes proteolytic processing to yield a 23 kDa form. Post-translationally, N-glycosylated with both high mannose and complex type sugars.

The protein resides in the secreted. Its subcellular location is the lysosome. It catalyses the reaction an aryl sulfate + H2O = a phenol + sulfate + H(+). The catalysed reaction is Hydrolysis of the 2-sulfate groups of the 2-O-sulfo-D-glucuronate residues of chondroitin sulfate, heparin and heparitin sulfate.. Functionally, catalyzes the hydrolysis of pseudosubstrates such as p-nitrocatechol sulfate and p-nitrophenyl sulfate. Catalyzes the hydrolysis of the 2-sulfate groups of the 2-O-sulfo-D-glucuronate residues of chondroitin sulfate, heparin and heparitin sulfate. Acts selectively on 2-sulfoglucuronate and lacks activity against 2-sulfoiduronate. The sequence is that of Arylsulfatase K (ARSK) from Canis lupus familiaris (Dog).